Consider the following 215-residue polypeptide: Adenylate kinase (215 aa).

10–15 contacts ATP; that stretch reads GAGKGT. The interval 30-59 is NMP; that stretch reads STGDILRANVREGTELGLAAKAYMDKGELV. Residues Thr31, Arg36, 57–59, 85–88, and Gln92 each bind AMP; these read ELV and GYPR. Positions 126 to 162 are LID; that stretch reads GRLMCKCGASYHTIANPPKKDNICDICGGEVYQRDDD. An ATP-binding site is contributed by Arg127. Cys130 and Cys132 together coordinate Zn(2+). 135–136 serves as a coordination point for ATP; it reads SY. Residues Cys149 and Cys152 each coordinate Zn(2+). 2 residues coordinate AMP: Arg159 and Arg170. Lys198 is an ATP binding site.

It belongs to the adenylate kinase family. As to quaternary structure, monomer.

It localises to the cytoplasm. It catalyses the reaction AMP + ATP = 2 ADP. It participates in purine metabolism; AMP biosynthesis via salvage pathway; AMP from ADP: step 1/1. Catalyzes the reversible transfer of the terminal phosphate group between ATP and AMP. Plays an important role in cellular energy homeostasis and in adenine nucleotide metabolism. The sequence is that of Adenylate kinase from Methanosarcina mazei (strain ATCC BAA-159 / DSM 3647 / Goe1 / Go1 / JCM 11833 / OCM 88) (Methanosarcina frisia).